The primary structure comprises 177 residues: MTRKSRRLILIAACGAVLALALGLILSAMSGSIVFFRSPAEVAAQGVPPGTRFRLGGLVKDGSVKRGPDQNVEFAVTDTNATVPVQYRGLLPDLFREGQGIVAEGTLDVGGVFRADTVLAKHDENYMPREVADALKAQGRWQEGGSKEAPKDASKAAPKDAAKPETADATLGQRSER.

The Cytoplasmic segment spans residues 1–7 (MTRKSRR). The chain crosses the membrane as a helical; Signal-anchor for type II membrane protein span at residues 8–28 (LILIAACGAVLALALGLILSA). At 29–177 (MSGSIVFFRS…DATLGQRSER (149 aa)) the chain is on the periplasmic side. The heme site is built by histidine 122 and tyrosine 126. Residues 133 to 177 (DALKAQGRWQEGGSKEAPKDASKAAPKDAAKPETADATLGQRSER) are disordered. The segment covering 145-166 (GSKEAPKDASKAAPKDAAKPET) has biased composition (basic and acidic residues).

Belongs to the CcmE/CycJ family.

It is found in the cell inner membrane. Its function is as follows. Heme chaperone required for the biogenesis of c-type cytochromes. Transiently binds heme delivered by CcmC and transfers the heme to apo-cytochromes in a process facilitated by CcmF and CcmH. This Methylorubrum extorquens (strain PA1) (Methylobacterium extorquens) protein is Cytochrome c-type biogenesis protein CcmE.